We begin with the raw amino-acid sequence, 483 residues long: Cyclic AMP-dependent transcription factor ATF-7 (483 aa).

Residues 1-285 (MGDDRPFVCN…GMVVGTASTM (285 aa)) are transactivation domain. The C2H2-type zinc-finger motif lies at 7–31 (FVCNAPGCGQRFTNEDHLAVHKHKH). T51 is subject to Phosphothreonine; by MAPK11. Phosphothreonine occurs at positions 53 and 101. A Glycyl lysine isopeptide (Lys-Gly) (interchain with G-Cter in SUMO1) cross-link involves residue K107. 2 disordered regions span residues 110 to 148 (EPVE…TPTP) and 299 to 345 (HPDA…NRAA). Low complexity-rich tracts occupy residues 114–126 (VDSS…ASSP) and 307–320 (QPQV…PSTG). The segment at 325–483 (RTVDEDPDER…MTPQSQSAGR (159 aa)) is essential for binding adenovirus 2 E1A. The segment covering 326-343 (TVDEDPDERRQRFLERNR) has biased composition (basic and acidic residues). The region spanning 332–395 (DERRQRFLER…AQLKQLLLAH (64 aa)) is the bZIP domain. A basic motif region spans residues 334-354 (RRQRFLERNRAAASRCRQKRK). The interval 360–388 (LEKKAEELTSQNIQLSNEVTLLRNEVAQL) is leucine-zipper. The tract at residues 407 to 439 (TQGYLESPKESSEPTGSPAPVIQHSSATAPSNG) is disordered. Phosphoserine is present on residues S413 and S423. The span at 429 to 439 (QHSSATAPSNG) shows a compositional bias: polar residues.

The protein belongs to the bZIP family. As to quaternary structure, homodimer; binds DNA as homodimer. Heterodimer; heterodimerizes with other members of ATF family and with JUN family members. Interacts with JNK2; the interaction does not phosphorylate ATF7 but acts as a docking site for other ATF-associated partners such as JUN family members. Interacts (via its transactivation domain) with TAF12 (isoforms TAFII15 and TAFII20); the interaction potentiates the transactivation activity (isoform TAFII20 only) and is inhibited by ATF7 sumoylation. Interacts with TAF4; the interaction inhibits the TAF12-dependent transactivation. Interacts with MAPK9; the interaction does not phosphorylate ATF7 but acts as a docking site for ATF7-associated partners such as JUN. Interacts with Ku complex components XRCC6 and XRCC7. Interacts with TERT. (Microbial infection) Interacts with adenovirus 2 E1A; the interaction enhances the ATF7-mediated viral transactivation activity which requires the zinc-binding domains of both E1A and ATF7. On EGF stimulation, phosphorylated first on Thr-53 allowing subsequent phosphorylation on Thr-51. This latter phosphorylation prevents sumoylation, increases binding to TAF12 and enhances transcriptional activity. In terms of processing, sumoylation delays nuclear localization and inhibits transactivation activity through preventing binding to TAF12. RANBP2 appears to be the specific E3 ligase. Post-translationally, on EGF stimulation, phosphorylated first on Thr-53 allowing subsequent phosphorylation on Thr-51. This latter phosphorylation prevents sumoylation, increases binding to TAF12 and enhances transcriptional activity. Social isolation stress as well as TNF-alpha also induce the phosphorylation of ATF7. Phosphorylated in proliferating colonic and small intestinal epithelial cells. As to expression, expressed in various tissues including heart, brain, placenta, lung and skeletal muscle. Highest levels in skeletal muscle. Lowest in lung and placenta. Strongly expressed in skeletal muscle. Also expressed at lower levels in heart and lung.

It is found in the nucleus. Its subcellular location is the nucleoplasm. The protein resides in the chromosome. The protein localises to the telomere. It localises to the cytoplasm. Its function is as follows. Stress-responsive chromatin regulator that plays a role in various biological processes including innate immunological memory, adipocyte differentiation or telomerase regulation. In absence of stress, contributes to the formation of heterochromatin and heterochromatin-like structure by recruiting histone H3K9 tri- and di-methyltransferases thus silencing the transcription of target genes such as STAT1 in adipocytes, or genes involved in innate immunity in macrophages and adipocytes. Stress induces ATF7 phosphorylation that disrupts interactions with histone methyltransferase and enhances the association with coactivators containing histone acetyltransferase and/or histone demethylase, leading to disruption of the heterochromatin-like structure and subsequently transcriptional activation. In response to TNF-alpha, which is induced by various stresses, phosphorylated ATF7 and telomerase are released from telomeres leading to telomere shortening. Also plays a role in maintaining epithelial regenerative capacity and protecting against cell death during intestinal epithelial damage and repair. Acts as a dominant repressor of the E-selectin/NF-ELAM1/delta-A promoter. In terms of biological role, acts as a negative regulator, inhibiting both ATF2 and ATF7 transcriptional activities. It may exert these effects by sequestrating in the cytoplasm the Thr-53 phosphorylating kinase, preventing activation. In Homo sapiens (Human), this protein is Cyclic AMP-dependent transcription factor ATF-7 (ATF7).